The sequence spans 186 residues: Ribosome-recycling factor (186 aa).

The protein belongs to the RRF family.

The protein resides in the cytoplasm. Functionally, responsible for the release of ribosomes from messenger RNA at the termination of protein biosynthesis. May increase the efficiency of translation by recycling ribosomes from one round of translation to another. The polypeptide is Ribosome-recycling factor (Rickettsia bellii (strain OSU 85-389)).